A 157-amino-acid polypeptide reads, in one-letter code: E3 ubiquitin-protein ligase RHA1B (157 aa).

An RING-type; atypical zinc finger spans residues 85-129 (CTVCLSDFVSDDKIRQLPKCGHVFHHRCLDRWIVDCNKITCPICR).

It carries out the reaction S-ubiquitinyl-[E2 ubiquitin-conjugating enzyme]-L-cysteine + [acceptor protein]-L-lysine = [E2 ubiquitin-conjugating enzyme]-L-cysteine + N(6)-ubiquitinyl-[acceptor protein]-L-lysine.. The protein operates within protein modification; protein ubiquitination. Functionally, possesses E3 ubiquitin-protein ligase activity when associated with the E2 enzyme UBC8 in vitro. In Arabidopsis thaliana (Mouse-ear cress), this protein is E3 ubiquitin-protein ligase RHA1B.